A 326-amino-acid chain; its full sequence is Cobalamin biosynthesis protein CobD (326 aa).

4 consecutive transmembrane segments (helical) span residues Met58–Leu78, Leu81–Leu101, Phe157–Leu177, and Val304–Leu324.

Belongs to the CobD/CbiB family.

It is found in the cell membrane. The protein operates within cofactor biosynthesis; adenosylcobalamin biosynthesis. Its function is as follows. Converts cobyric acid to cobinamide by the addition of aminopropanol on the F carboxylic group. The polypeptide is Cobalamin biosynthesis protein CobD (Sinorhizobium fredii (strain NBRC 101917 / NGR234)).